Consider the following 366-residue polypeptide: 5-hydroxytryptamine receptor 1F (366 aa).

The Extracellular segment spans residues 1–24 (MDFLNASDQNLTSEELLNRMPSKI). Asn-5 and Asn-10 each carry an N-linked (GlcNAc...) asparagine glycan. The chain crosses the membrane as a helical span at residues 25 to 49 (LVSLTLSGLALMTTTINSLVIAAII). Residues 50–59 (VTRKLHHPAN) lie on the Cytoplasmic side of the membrane. A helical membrane pass occupies residues 60–81 (YLICSLAVTDFLVAVLVMPFSI). The Extracellular segment spans residues 82–96 (VYIVRESWIMGQVLC). A disulfide bridge connects residues Cys-96 and Cys-172. A helical membrane pass occupies residues 97–119 (DIWLSVDIICCTCSILHLSAIAL). Serotonin is bound by residues Asp-103 and Cys-107. Positions 120–122 (DRY) match the DRY motif; important for ligand-induced conformation changes motif. Topologically, residues 120-139 (DRYRAITDAVEYARKRTPRH) are cytoplasmic. The helical transmembrane segment at 140-159 (AGIMITIVWVISVFISMPPL) threads the bilayer. Residues 160–178 (FWRHQGTSRDDECVIKHDH) are Extracellular-facing. A helical membrane pass occupies residues 179–202 (IVSTIYSTFGAFYIPLVLILILYY). At 203-291 (KIYRAARTLY…KISGTRERKA (89 aa)) the chain is on the cytoplasmic side. A helical membrane pass occupies residues 292 to 315 (ATTLGLILGAFVICWLPFFVKELV). Over 316-327 (VNVCEKCKISEE) the chain is Extracellular. The chain crosses the membrane as a helical span at residues 328 to 350 (MSNFLAWLGYLNSLINPLIYTIF). Positions 343–347 (NPLIY) match the NPxxY motif; important for ligand-induced conformation changes and signaling motif. The Cytoplasmic segment spans residues 351–366 (NEDFKKAFQKLVRCRY).

It belongs to the G-protein coupled receptor 1 family. In terms of tissue distribution, detected in hippocampus.

It localises to the cell membrane. Its function is as follows. G-protein coupled receptor for 5-hydroxytryptamine (serotonin). Also functions as a receptor for various alkaloids and psychoactive substances. Ligand binding causes a conformation change that triggers signaling via guanine nucleotide-binding proteins (G proteins) and modulates the activity of downstream effectors, such as adenylate cyclase. HTR1F is coupled to G(i)/G(o) G alpha proteins and mediates inhibitory neurotransmission by inhibiting adenylate cyclase activity. The polypeptide is 5-hydroxytryptamine receptor 1F (Htr1f) (Mus musculus (Mouse)).